Here is a 266-residue protein sequence, read N- to C-terminus: Dihydropteroate synthase (266 aa).

The region spanning 12–260 (AAIMGILNVT…DVKANQDIVA (249 aa)) is the Pterin-binding domain. Asn19 provides a ligand contact to Mg(2+). Residues Thr59, Asp93, Asn112, Asp176, Lys212, and 248–250 (RVH) each bind (7,8-dihydropterin-6-yl)methyl diphosphate.

This sequence belongs to the DHPS family. As to quaternary structure, homodimer or homotrimer. Requires Mg(2+) as cofactor.

The catalysed reaction is (7,8-dihydropterin-6-yl)methyl diphosphate + 4-aminobenzoate = 7,8-dihydropteroate + diphosphate. It functions in the pathway cofactor biosynthesis; tetrahydrofolate biosynthesis; 7,8-dihydrofolate from 2-amino-4-hydroxy-6-hydroxymethyl-7,8-dihydropteridine diphosphate and 4-aminobenzoate: step 1/2. Its function is as follows. Catalyzes the condensation of para-aminobenzoate (pABA) with 6-hydroxymethyl-7,8-dihydropterin diphosphate (DHPt-PP) to form 7,8-dihydropteroate (H2Pte), the immediate precursor of folate derivatives. In Streptococcus pyogenes serotype M1, this protein is Dihydropteroate synthase (folP).